The sequence spans 114 residues: Protein S40-2 (114 aa).

Residues 23-50 (RYTKLYNSRNDEKKGTRRHETAEKTSPV) are disordered. The span at 31 to 45 (RNDEKKGTRRHETAE) shows a compositional bias: basic and acidic residues.

Belongs to the senescence regulator S40 family.

Its subcellular location is the cytoplasm. In Arabidopsis thaliana (Mouse-ear cress), this protein is Protein S40-2.